The chain runs to 344 residues: Phenylalanine--tRNA ligase alpha subunit (344 aa).

Glu-256 lines the Mg(2+) pocket.

Belongs to the class-II aminoacyl-tRNA synthetase family. Phe-tRNA synthetase alpha subunit type 1 subfamily. As to quaternary structure, tetramer of two alpha and two beta subunits. Mg(2+) is required as a cofactor.

It is found in the cytoplasm. The catalysed reaction is tRNA(Phe) + L-phenylalanine + ATP = L-phenylalanyl-tRNA(Phe) + AMP + diphosphate + H(+). This chain is Phenylalanine--tRNA ligase alpha subunit (pheS), found in Halalkalibacterium halodurans (strain ATCC BAA-125 / DSM 18197 / FERM 7344 / JCM 9153 / C-125) (Bacillus halodurans).